Reading from the N-terminus, the 364-residue chain is Aminomethyltransferase (364 aa).

Belongs to the GcvT family. As to quaternary structure, the glycine cleavage system is composed of four proteins: P, T, L and H.

The enzyme catalyses N(6)-[(R)-S(8)-aminomethyldihydrolipoyl]-L-lysyl-[protein] + (6S)-5,6,7,8-tetrahydrofolate = N(6)-[(R)-dihydrolipoyl]-L-lysyl-[protein] + (6R)-5,10-methylene-5,6,7,8-tetrahydrofolate + NH4(+). Functionally, the glycine cleavage system catalyzes the degradation of glycine. The protein is Aminomethyltransferase of Shewanella sp. (strain MR-4).